The following is a 244-amino-acid chain: Flavin-dependent thymidylate synthase (244 aa).

A ThyX domain is found at 7 to 199; it reads PRVFLIASWG…PNLARLVWED (193 aa). Residues S60 and 83-85 each bind FAD; that span reads RHR. Residues 80–83, 93–95, and R137 contribute to the dUMP site; these read QFIR and SQR. A ThyX motif motif is present at residues 83–93; that stretch reads RHRMASYWSES. FAD-binding positions include 153–155 and N160; that span reads NAR. R165 provides a ligand contact to dUMP. R165 (involved in ionization of N3 of dUMP, leading to its activation) is an active-site residue.

The protein belongs to the thymidylate synthase ThyX family. Homotetramer. Requires FAD as cofactor.

It catalyses the reaction dUMP + (6R)-5,10-methylene-5,6,7,8-tetrahydrofolate + NADPH + H(+) = dTMP + (6S)-5,6,7,8-tetrahydrofolate + NADP(+). It functions in the pathway pyrimidine metabolism; dTTP biosynthesis. Catalyzes the reductive methylation of 2'-deoxyuridine-5'-monophosphate (dUMP) to 2'-deoxythymidine-5'-monophosphate (dTMP) while utilizing 5,10-methylenetetrahydrofolate (mTHF) as the methyl donor, and NADPH and FADH(2) as the reductant. The sequence is that of Flavin-dependent thymidylate synthase from Pyrobaculum aerophilum (strain ATCC 51768 / DSM 7523 / JCM 9630 / CIP 104966 / NBRC 100827 / IM2).